The primary structure comprises 246 residues: Ubiquinone biosynthesis O-methyltransferase (246 aa).

S-adenosyl-L-methionine contacts are provided by R36, G60, D81, and L123.

The protein belongs to the methyltransferase superfamily. UbiG/COQ3 family.

The catalysed reaction is a 3-demethylubiquinol + S-adenosyl-L-methionine = a ubiquinol + S-adenosyl-L-homocysteine + H(+). It catalyses the reaction a 3-(all-trans-polyprenyl)benzene-1,2-diol + S-adenosyl-L-methionine = a 2-methoxy-6-(all-trans-polyprenyl)phenol + S-adenosyl-L-homocysteine + H(+). It functions in the pathway cofactor biosynthesis; ubiquinone biosynthesis. O-methyltransferase that catalyzes the 2 O-methylation steps in the ubiquinone biosynthetic pathway. The sequence is that of Ubiquinone biosynthesis O-methyltransferase from Rickettsia typhi (strain ATCC VR-144 / Wilmington).